The primary structure comprises 34 residues: Photosystem II reaction center protein M (34 aa).

A helical transmembrane segment spans residues 5 to 25 (ILAFIATALFILIPTAFLLIL).

It belongs to the PsbM family. In terms of assembly, PSII is composed of 1 copy each of membrane proteins PsbA, PsbB, PsbC, PsbD, PsbE, PsbF, PsbH, PsbI, PsbJ, PsbK, PsbL, PsbM, PsbT, PsbX, PsbY, PsbZ, Psb30/Ycf12, at least 3 peripheral proteins of the oxygen-evolving complex and a large number of cofactors. It forms dimeric complexes.

It localises to the plastid. It is found in the chloroplast thylakoid membrane. Functionally, one of the components of the core complex of photosystem II (PSII). PSII is a light-driven water:plastoquinone oxidoreductase that uses light energy to abstract electrons from H(2)O, generating O(2) and a proton gradient subsequently used for ATP formation. It consists of a core antenna complex that captures photons, and an electron transfer chain that converts photonic excitation into a charge separation. This subunit is found at the monomer-monomer interface. The sequence is that of Photosystem II reaction center protein M from Anthoceros angustus (Hornwort).